The following is a 388-amino-acid chain: Succinate--CoA ligase [ADP-forming] subunit beta (388 aa).

Residues 9 to 244 enclose the ATP-grasp domain; sequence KGILSGFDVR…PHEYSEEELE (236 aa). Residues K46, 53-55, E99, V102, and E107 each bind ATP; that span reads GRG. Mg(2+)-binding residues include N199 and D213. Substrate contacts are provided by residues N264 and 320–322; that span reads GIM.

Belongs to the succinate/malate CoA ligase beta subunit family. As to quaternary structure, heterotetramer of two alpha and two beta subunits. The cofactor is Mg(2+).

It catalyses the reaction succinate + ATP + CoA = succinyl-CoA + ADP + phosphate. It carries out the reaction GTP + succinate + CoA = succinyl-CoA + GDP + phosphate. Its pathway is carbohydrate metabolism; tricarboxylic acid cycle; succinate from succinyl-CoA (ligase route): step 1/1. Functionally, succinyl-CoA synthetase functions in the citric acid cycle (TCA), coupling the hydrolysis of succinyl-CoA to the synthesis of either ATP or GTP and thus represents the only step of substrate-level phosphorylation in the TCA. The beta subunit provides nucleotide specificity of the enzyme and binds the substrate succinate, while the binding sites for coenzyme A and phosphate are found in the alpha subunit. This Anaplasma phagocytophilum (strain HZ) protein is Succinate--CoA ligase [ADP-forming] subunit beta.